We begin with the raw amino-acid sequence, 292 residues long: Elongation factor Ts (292 aa).

Residues 82-85 (TDFV) form an involved in Mg(2+) ion dislocation from EF-Tu region.

It belongs to the EF-Ts family.

The protein localises to the cytoplasm. Associates with the EF-Tu.GDP complex and induces the exchange of GDP to GTP. It remains bound to the aminoacyl-tRNA.EF-Tu.GTP complex up to the GTP hydrolysis stage on the ribosome. This Legionella pneumophila (strain Lens) protein is Elongation factor Ts.